The sequence spans 215 residues: MKYELTATEARVIGCLLEKQVTTPEQYPLSVHGVVTACNQKTNREPVMNLTEQAVQEQLDNLVKRHFLRTVSGFGNRVTKYEQRFCNSEFGDLKLSAAEVALVTTLLLRGAQTPGELRSRASRMYEFSDMAEVESTLERLASREDGPYVIRLAREPGKRESRYMHLFCGDVDELSLQTSVPDSASGDLQSRVEALESEVAELKQRLDSLLAHLGE.

The protein belongs to the UPF0502 family.

In Salmonella arizonae (strain ATCC BAA-731 / CDC346-86 / RSK2980), this protein is UPF0502 protein YceH.